Here is a 224-residue protein sequence, read N- to C-terminus: Urease accessory protein UreF (224 aa).

The protein belongs to the UreF family. In terms of assembly, ureD, UreF and UreG form a complex that acts as a GTP-hydrolysis-dependent molecular chaperone, activating the urease apoprotein by helping to assemble the nickel containing metallocenter of UreC. The UreE protein probably delivers the nickel.

The protein localises to the cytoplasm. In terms of biological role, required for maturation of urease via the functional incorporation of the urease nickel metallocenter. In Pseudomonas putida (strain ATCC 47054 / DSM 6125 / CFBP 8728 / NCIMB 11950 / KT2440), this protein is Urease accessory protein UreF.